We begin with the raw amino-acid sequence, 34 residues long: Photosystem II reaction center protein M (34 aa).

Residues 5 to 25 (ILALIAIALFISVPTAFLIII) traverse the membrane as a helical segment.

Belongs to the PsbM family. As to quaternary structure, PSII is composed of 1 copy each of membrane proteins PsbA, PsbB, PsbC, PsbD, PsbE, PsbF, PsbH, PsbI, PsbJ, PsbK, PsbL, PsbM, PsbT, PsbX, PsbY, PsbZ, Psb30/Ycf12, at least 3 peripheral proteins of the oxygen-evolving complex and a large number of cofactors. It forms dimeric complexes.

The protein localises to the plastid. Its subcellular location is the chloroplast thylakoid membrane. One of the components of the core complex of photosystem II (PSII). PSII is a light-driven water:plastoquinone oxidoreductase that uses light energy to abstract electrons from H(2)O, generating O(2) and a proton gradient subsequently used for ATP formation. It consists of a core antenna complex that captures photons, and an electron transfer chain that converts photonic excitation into a charge separation. This subunit is found at the monomer-monomer interface. In Gnetum parvifolium (Small-leaved jointfir), this protein is Photosystem II reaction center protein M.